A 252-amino-acid chain; its full sequence is MKVIFNADDFGLTRGVNDGIVHAHLDGVVRSTTMMVGMPAEAHAVELANHLPELKVGLHLRFTAGRPLTEEQNLVGRDGDFTPYGQFWHRRDYDPIAIHNEAVAQVEYFLALGLNLSHIDSHHHAHTHPQFEPVIYDIARTYQVPLRSTGLAGEEEFGCRYHFTDHFYDKRVGHDSLIQHLLTLKEHYDVVEVMCHPAIVDTALEACSGYAKQRELELAILTSDELKLSLRKHDIEVTDYSELIFAPLHSCV.

Residues H59 and H122 each coordinate Mg(2+).

Belongs to the YdjC deacetylase family. As to quaternary structure, homodimer. The cofactor is Mg(2+).

In terms of biological role, probably catalyzes the deacetylation of acetylated carbohydrates an important step in the degradation of oligosaccharides. In Vibrio vulnificus (strain CMCP6), this protein is Carbohydrate deacetylase.